Consider the following 336-residue polypeptide: Ventral anterior homeobox 1 (336 aa).

A compositionally biased stretch (basic and acidic residues) spans 1–34 (MFGKTDKMDVRCHSDTEAARVSKNAHKESREIKG). 2 disordered regions span residues 1-39 (MFGK…EGSL) and 50-69 (AFSA…NSSA). Positions 100-159 (PKRTRTSFTAEQLYRLEMEFQRCQYVVGRERTELARQLNLSETQVKVWFQNRRTKQKKDQ) form a DNA-binding region, homeobox. Residues 236–250 (PGPAGAASQHPPAVG) show a composition bias toward low complexity. Disordered stretches follow at residues 236–267 (PGPA…HAGA) and 316–336 (SAFE…KALD). The span at 325-336 (NNKEGAEKKALD) shows a compositional bias: basic and acidic residues.

The protein belongs to the EMX homeobox family.

Its subcellular location is the nucleus. Its function is as follows. Transcription factor that may function in dorsoventral specification of the forebrain. Required for axon guidance and major tract formation in the developing forebrain. May contribute to the differentiation of the neuroretina, pigmented epithelium and optic stalk. This Rattus norvegicus (Rat) protein is Ventral anterior homeobox 1 (Vax1).